The following is a 307-amino-acid chain: Protoheme IX farnesyltransferase (307 aa).

A run of 9 helical transmembrane segments spans residues 29-49 (VISL…RGWP), 51-71 (LGLL…AGVF), 101-120 (AAIF…WVWA), 124-143 (AAWM…TLWL), 151-171 (IVLG…AVTG), 179-199 (FLFA…ALMI), 218-238 (RLTV…SVMP), 239-259 (VFLG…GWLL), and 280-300 (VAVP…VAGA).

The protein belongs to the UbiA prenyltransferase family. Protoheme IX farnesyltransferase subfamily.

It localises to the cell membrane. The catalysed reaction is heme b + (2E,6E)-farnesyl diphosphate + H2O = Fe(II)-heme o + diphosphate. The protein operates within porphyrin-containing compound metabolism; heme O biosynthesis; heme O from protoheme: step 1/1. Its function is as follows. Converts heme B (protoheme IX) to heme O by substitution of the vinyl group on carbon 2 of heme B porphyrin ring with a hydroxyethyl farnesyl side group. In Deinococcus geothermalis (strain DSM 11300 / CIP 105573 / AG-3a), this protein is Protoheme IX farnesyltransferase.